Here is a 494-residue protein sequence, read N- to C-terminus: Sulfate adenylyltransferase subunit 1 (494 aa).

The tr-type G domain maps to 24–240 (TRPLRLITCG…LELATVRSAQ (217 aa)). The interval 33–40 (GSVDDGKS) is G1. 33-40 (GSVDDGKS) lines the GTP pocket. Residues 91 to 95 (GITID) form a G2 region. Positions 112–115 (DTPG) are G3. GTP is bound by residues 112-116 (DTPGH) and 167-170 (NKID). Residues 167 to 170 (NKID) form a G4 region. The tract at residues 204–206 (SAL) is G5.

It belongs to the TRAFAC class translation factor GTPase superfamily. Classic translation factor GTPase family. CysN/NodQ subfamily. In terms of assembly, heterodimer composed of CysD, the smaller subunit, and CysN.

The catalysed reaction is sulfate + ATP + H(+) = adenosine 5'-phosphosulfate + diphosphate. Its pathway is sulfur metabolism; hydrogen sulfide biosynthesis; sulfite from sulfate: step 1/3. In terms of biological role, with CysD forms the ATP sulfurylase (ATPS) that catalyzes the adenylation of sulfate producing adenosine 5'-phosphosulfate (APS) and diphosphate, the first enzymatic step in sulfur assimilation pathway. APS synthesis involves the formation of a high-energy phosphoric-sulfuric acid anhydride bond driven by GTP hydrolysis by CysN coupled to ATP hydrolysis by CysD. The chain is Sulfate adenylyltransferase subunit 1 from Rhizobium tropici.